The following is a 281-amino-acid chain: 4-diphosphocytidyl-2-C-methyl-D-erythritol kinase (281 aa).

The active site involves Lys-15. 98–108 provides a ligand contact to ATP; the sequence is PTGAGLGGGSS. Residue Asp-140 is part of the active site.

The protein belongs to the GHMP kinase family. IspE subfamily.

The catalysed reaction is 4-CDP-2-C-methyl-D-erythritol + ATP = 4-CDP-2-C-methyl-D-erythritol 2-phosphate + ADP + H(+). It participates in isoprenoid biosynthesis; isopentenyl diphosphate biosynthesis via DXP pathway; isopentenyl diphosphate from 1-deoxy-D-xylulose 5-phosphate: step 3/6. In terms of biological role, catalyzes the phosphorylation of the position 2 hydroxy group of 4-diphosphocytidyl-2C-methyl-D-erythritol. This is 4-diphosphocytidyl-2-C-methyl-D-erythritol kinase from Neisseria meningitidis serogroup C (strain 053442).